Here is a 335-residue protein sequence, read N- to C-terminus: Nucleoid-associated protein YejK (335 aa).

This sequence belongs to the YejK family.

The protein localises to the cytoplasm. It localises to the nucleoid. The sequence is that of Nucleoid-associated protein YejK from Salmonella arizonae (strain ATCC BAA-731 / CDC346-86 / RSK2980).